The primary structure comprises 283 residues: Polyamine aminopropyltransferase (283 aa).

In terms of domain architecture, PABS spans 5 to 241 (NNWYIEHFER…GWWSVTMARK (237 aa)). Gln-35 contacts S-methyl-5'-thioadenosine. Spermidine-binding residues include His-66 and Asp-90. S-methyl-5'-thioadenosine is bound by residues Asp-110 and 141 to 142 (DG). Asp-160 serves as the catalytic Proton acceptor. 160 to 163 (DSTD) lines the spermidine pocket. Residue Pro-167 coordinates S-methyl-5'-thioadenosine.

This sequence belongs to the spermidine/spermine synthase family. Homodimer or homotetramer.

It localises to the cytoplasm. The catalysed reaction is S-adenosyl 3-(methylsulfanyl)propylamine + putrescine = S-methyl-5'-thioadenosine + spermidine + H(+). It functions in the pathway amine and polyamine biosynthesis; spermidine biosynthesis; spermidine from putrescine: step 1/1. In terms of biological role, catalyzes the irreversible transfer of a propylamine group from the amino donor S-adenosylmethioninamine (decarboxy-AdoMet) to putrescine (1,4-diaminobutane) to yield spermidine. The protein is Polyamine aminopropyltransferase of Stenotrophomonas maltophilia (strain K279a).